A 417-amino-acid polypeptide reads, in one-letter code: MAEIKNYSLNFGPQHPAAHGVLRLVLELDGEVVQRADPHIGLLHRATEKLAEHKTYIQSLPYMDRLDYVSMMCNEQAYCLAIEKMLGIEVPLRAKYIRTMFGEITRLLNHLMWLGSHGNDCGSSTILIYTFREREDLFDMYEAVSGARMHAAYFRPGGVYRDLPDSMAQYKVSKIKNAKAIEELNRNRQGSLLDFIDDFTQRFPKCVDEYETLLTDNRIWKQRTVGIGVVPAERALNLGMTGPMLRGSGIAWDLRKKQPYDAYDRVDFDVPVGVTGDSYDRYLVRVQEMRESNRIIKQCVDWLRANPGPVITDNHKIAPPSREAMKSNMEELIHHFKLFTEGFRVPAGEAYAAVEHPKGEFGIYMVSDGANKPYRLKIRAPGFAHLATLDEMARGHMLADAVAIIGTMDIVFGEIDR.

The protein belongs to the complex I 49 kDa subunit family. NDH-1 is composed of 14 different subunits. Subunits NuoB, C, D, E, F, and G constitute the peripheral sector of the complex.

The protein localises to the cell inner membrane. The catalysed reaction is a quinone + NADH + 5 H(+)(in) = a quinol + NAD(+) + 4 H(+)(out). Its function is as follows. NDH-1 shuttles electrons from NADH, via FMN and iron-sulfur (Fe-S) centers, to quinones in the respiratory chain. The immediate electron acceptor for the enzyme in this species is believed to be ubiquinone. Couples the redox reaction to proton translocation (for every two electrons transferred, four hydrogen ions are translocated across the cytoplasmic membrane), and thus conserves the redox energy in a proton gradient. The polypeptide is NADH-quinone oxidoreductase subunit D (Acidovorax sp. (strain JS42)).